A 434-amino-acid chain; its full sequence is Methylenetetrahydrofolate--tRNA-(uracil-5-)-methyltransferase TrmFO (434 aa).

9–14 (GAGLAG) contacts FAD.

The protein belongs to the MnmG family. TrmFO subfamily. Requires FAD as cofactor.

The protein localises to the cytoplasm. The enzyme catalyses uridine(54) in tRNA + (6R)-5,10-methylene-5,6,7,8-tetrahydrofolate + NADH + H(+) = 5-methyluridine(54) in tRNA + (6S)-5,6,7,8-tetrahydrofolate + NAD(+). The catalysed reaction is uridine(54) in tRNA + (6R)-5,10-methylene-5,6,7,8-tetrahydrofolate + NADPH + H(+) = 5-methyluridine(54) in tRNA + (6S)-5,6,7,8-tetrahydrofolate + NADP(+). Catalyzes the folate-dependent formation of 5-methyl-uridine at position 54 (M-5-U54) in all tRNAs. The polypeptide is Methylenetetrahydrofolate--tRNA-(uracil-5-)-methyltransferase TrmFO (Bacillus pumilus (strain SAFR-032)).